A 264-amino-acid chain; its full sequence is 3-methyl-2-oxobutanoate hydroxymethyltransferase (264 aa).

Mg(2+) contacts are provided by aspartate 45 and aspartate 84. 3-methyl-2-oxobutanoate contacts are provided by residues 45-46 (DS), aspartate 84, and lysine 112. Glutamate 114 is a Mg(2+) binding site. Glutamate 181 functions as the Proton acceptor in the catalytic mechanism.

It belongs to the PanB family. Homodecamer; pentamer of dimers. The cofactor is Mg(2+).

It localises to the cytoplasm. The catalysed reaction is 3-methyl-2-oxobutanoate + (6R)-5,10-methylene-5,6,7,8-tetrahydrofolate + H2O = 2-dehydropantoate + (6S)-5,6,7,8-tetrahydrofolate. It participates in cofactor biosynthesis; (R)-pantothenate biosynthesis; (R)-pantoate from 3-methyl-2-oxobutanoate: step 1/2. In terms of biological role, catalyzes the reversible reaction in which hydroxymethyl group from 5,10-methylenetetrahydrofolate is transferred onto alpha-ketoisovalerate to form ketopantoate. The protein is 3-methyl-2-oxobutanoate hydroxymethyltransferase of Shewanella sp. (strain MR-7).